The chain runs to 269 residues: Uncharacterised methyltransferase MT1546 (269 aa).

This sequence belongs to the methyltransferase superfamily.

The polypeptide is Uncharacterised methyltransferase MT1546 (Mycobacterium tuberculosis (strain CDC 1551 / Oshkosh)).